A 496-amino-acid chain; its full sequence is L-arabinose isomerase (496 aa).

The Mn(2+) site is built by Glu302, Glu329, His346, and His445.

The protein belongs to the arabinose isomerase family. Requires Mn(2+) as cofactor.

The enzyme catalyses beta-L-arabinopyranose = L-ribulose. It participates in carbohydrate degradation; L-arabinose degradation via L-ribulose; D-xylulose 5-phosphate from L-arabinose (bacterial route): step 1/3. Functionally, catalyzes the conversion of L-arabinose to L-ribulose. This chain is L-arabinose isomerase, found in Thermotoga maritima (strain ATCC 43589 / DSM 3109 / JCM 10099 / NBRC 100826 / MSB8).